The sequence spans 880 residues: Alanine--tRNA ligase (880 aa).

4 residues coordinate Zn(2+): His-558, His-562, Cys-663, and His-667.

The protein belongs to the class-II aminoacyl-tRNA synthetase family. Zn(2+) serves as cofactor.

Its subcellular location is the cytoplasm. It catalyses the reaction tRNA(Ala) + L-alanine + ATP = L-alanyl-tRNA(Ala) + AMP + diphosphate. Catalyzes the attachment of alanine to tRNA(Ala) in a two-step reaction: alanine is first activated by ATP to form Ala-AMP and then transferred to the acceptor end of tRNA(Ala). Also edits incorrectly charged Ser-tRNA(Ala) and Gly-tRNA(Ala) via its editing domain. The sequence is that of Alanine--tRNA ligase from Mycoplasmopsis agalactiae (strain NCTC 10123 / CIP 59.7 / PG2) (Mycoplasma agalactiae).